The sequence spans 381 residues: Homoserine O-succinyltransferase (381 aa).

The 316-residue stretch at 45–360 (NAVLVCHALN…PHGHDAFLLD (316 aa)) folds into the AB hydrolase-1 domain. S151 functions as the Nucleophile in the catalytic mechanism. R221 serves as a coordination point for substrate. Active-site residues include D321 and H354. D355 contributes to the substrate binding site.

This sequence belongs to the AB hydrolase superfamily. MetX family. As to quaternary structure, homodimer.

It localises to the cytoplasm. It carries out the reaction L-homoserine + succinyl-CoA = O-succinyl-L-homoserine + CoA. The protein operates within amino-acid biosynthesis; L-methionine biosynthesis via de novo pathway; O-succinyl-L-homoserine from L-homoserine: step 1/1. In terms of biological role, transfers a succinyl group from succinyl-CoA to L-homoserine, forming succinyl-L-homoserine. This chain is Homoserine O-succinyltransferase, found in Burkholderia pseudomallei (strain 1710b).